The chain runs to 425 residues: Septin-11 (425 aa).

Position 2 is an N-acetylalanine (Ala2). A Phosphoserine modification is found at Ser9. Positions 38–304 (QGFCFNILCV…ELYRRCKLEE (267 aa)) constitute a Septin-type G domain. The tract at residues 48-55 (GETGIGKS) is G1 motif. Residues 48–55 (GETGIGKS), Gly103, 184–192 (KADTIAKNE), Gly238, and Arg253 each bind GTP. Residues 100–103 (DTVG) form a G3 motif region. Positions 183 to 186 (AKAD) are G4 motif. The stretch at 320 to 410 (QETYEAKRNE…AAQLLQSQAQ (91 aa)) forms a coiled coil. A disordered region spans residues 399–425 (KAAAQLLQSQAQQSGAQQTKKDKDKKN). Residues 401-416 (AAQLLQSQAQQSGAQQ) are compositionally biased toward low complexity.

The protein belongs to the TRAFAC class TrmE-Era-EngA-EngB-Septin-like GTPase superfamily. Septin GTPase family. As to quaternary structure, septins polymerize into heterooligomeric protein complexes that form filaments, and can associate with cellular membranes, actin filaments and microtubules. Forms homooligomers. GTPase activity is required for filament formation. Interacts with SEPTIN7, SEPTIN9 and SEPTIN12.

Its subcellular location is the cytoplasm. The protein localises to the cytoskeleton. It localises to the synapse. The protein resides in the cell projection. It is found in the dendritic spine. Its subcellular location is the axon. In terms of biological role, filament-forming cytoskeletal GTPase. May play a role in cytokinesis (Potential). May play a role in the cytoarchitecture of neurons, including dendritic arborization and dendritic spines, and in GABAergic synaptic connectivity. This is Septin-11 from Bos taurus (Bovine).